The sequence spans 356 residues: Methionine import ATP-binding protein MetN (356 aa).

Residues 7–250 (IKLDNIDVTF…PRESLTQDFI (244 aa)) form the ABC transporter domain. 43-50 (GYSGAGKS) contributes to the ATP binding site.

The protein belongs to the ABC transporter superfamily. Methionine importer (TC 3.A.1.24) family. The complex is composed of two ATP-binding proteins (MetN), two transmembrane proteins (MetI) and a solute-binding protein (MetQ).

It localises to the cell membrane. It catalyses the reaction L-methionine(out) + ATP + H2O = L-methionine(in) + ADP + phosphate + H(+). The catalysed reaction is D-methionine(out) + ATP + H2O = D-methionine(in) + ADP + phosphate + H(+). Functionally, part of the ABC transporter complex MetNIQ involved in methionine import. Responsible for energy coupling to the transport system. This chain is Methionine import ATP-binding protein MetN, found in Streptococcus agalactiae serotype Ia (strain ATCC 27591 / A909 / CDC SS700).